A 159-amino-acid polypeptide reads, in one-letter code: MTRKGRRLVLIGAGLGVLALAAGLILSALNDTIVFFRSPTEVAQQQVAPGARLRLGGLVETGSVVKSGTLTTFKVTDGNATVKVAYSGILPDLFREGQGVVAEGALQPDGSFKADSVLAKHDEKYMPREVADALKKQGRWQEGGPAPGTAAPVQRAPGS.

The Cytoplasmic segment spans residues 1–7 (MTRKGRR). The helical; Signal-anchor for type II membrane protein transmembrane segment at 8-28 (LVLIGAGLGVLALAAGLILSA) threads the bilayer. Over 29-159 (LNDTIVFFRS…AAPVQRAPGS (131 aa)) the chain is Periplasmic. Positions 121 and 125 each coordinate heme. Residues 134–159 (LKKQGRWQEGGPAPGTAAPVQRAPGS) form a disordered region.

This sequence belongs to the CcmE/CycJ family.

It localises to the cell inner membrane. Functionally, heme chaperone required for the biogenesis of c-type cytochromes. Transiently binds heme delivered by CcmC and transfers the heme to apo-cytochromes in a process facilitated by CcmF and CcmH. The chain is Cytochrome c-type biogenesis protein CcmE from Xanthobacter autotrophicus (strain ATCC BAA-1158 / Py2).